The sequence spans 375 residues: Chaperone protein DnaJ (375 aa).

Residues 6–71 (DYYEILGVSR…DKRARYDQYG (66 aa)) form the J domain. The segment at 132–214 (GTTKKITIPR…CQGSGKVRKQ (83 aa)) adopts a CR-type zinc-finger fold. Zn(2+) is bound by residues cysteine 145, cysteine 148, cysteine 162, cysteine 165, cysteine 188, cysteine 191, cysteine 202, and cysteine 205. 4 CXXCXGXG motif repeats span residues 145–152 (CDTCNGTG), 162–169 (CPQCNGSG), 188–195 (CDRCGGRG), and 202–209 (CPTCQGSG). Residues 222-243 (PPGVDTGTRLRMPNEGEAGDKG) form a disordered region.

It belongs to the DnaJ family. In terms of assembly, homodimer. Zn(2+) serves as cofactor.

It is found in the cytoplasm. Functionally, participates actively in the response to hyperosmotic and heat shock by preventing the aggregation of stress-denatured proteins and by disaggregating proteins, also in an autonomous, DnaK-independent fashion. Unfolded proteins bind initially to DnaJ; upon interaction with the DnaJ-bound protein, DnaK hydrolyzes its bound ATP, resulting in the formation of a stable complex. GrpE releases ADP from DnaK; ATP binding to DnaK triggers the release of the substrate protein, thus completing the reaction cycle. Several rounds of ATP-dependent interactions between DnaJ, DnaK and GrpE are required for fully efficient folding. Also involved, together with DnaK and GrpE, in the DNA replication of plasmids through activation of initiation proteins. In Halothermothrix orenii (strain H 168 / OCM 544 / DSM 9562), this protein is Chaperone protein DnaJ.